A 309-amino-acid polypeptide reads, in one-letter code: uncharacterized protein (309 aa).

Disordered stretches follow at residues 1 to 94 (IGEV…RQQI) and 286 to 309 (HTRN…PPRG). A compositionally biased stretch (pro residues) spans 30–43 (PAQPPSPAPTPSRT). Residues 58–67 (RSKTPDKRSA) show a composition bias toward basic and acidic residues. The segment covering 297 to 309 (KNTPPPLEDPPRG) has biased composition (pro residues).

This is an uncharacterized protein from Homo sapiens (Human).